We begin with the raw amino-acid sequence, 273 residues long: Thiazole synthase (273 aa).

Lys-110 acts as the Schiff-base intermediate with DXP in catalysis. Residues Gly-171, 197 to 198, and 219 to 220 contribute to the 1-deoxy-D-xylulose 5-phosphate site; these read AG and NT. Residues 251-273 are disordered; the sequence is MAAQDSAQPSTPVLGTPFWHHAP.

It belongs to the ThiG family. In terms of assembly, homotetramer. Forms heterodimers with either ThiH or ThiS.

The protein resides in the cytoplasm. The catalysed reaction is [ThiS sulfur-carrier protein]-C-terminal-Gly-aminoethanethioate + 2-iminoacetate + 1-deoxy-D-xylulose 5-phosphate = [ThiS sulfur-carrier protein]-C-terminal Gly-Gly + 2-[(2R,5Z)-2-carboxy-4-methylthiazol-5(2H)-ylidene]ethyl phosphate + 2 H2O + H(+). It participates in cofactor biosynthesis; thiamine diphosphate biosynthesis. Catalyzes the rearrangement of 1-deoxy-D-xylulose 5-phosphate (DXP) to produce the thiazole phosphate moiety of thiamine. Sulfur is provided by the thiocarboxylate moiety of the carrier protein ThiS. In vitro, sulfur can be provided by H(2)S. The protein is Thiazole synthase of Variovorax paradoxus (strain S110).